The sequence spans 118 residues: V-type proton ATPase subunit G 3 (118 aa).

Residues 1-12 (MASQSQGIQQLL) show a composition bias toward polar residues. The interval 1–37 (MASQSQGIQQLLQAEKRAKDKLEEAKKRKNKRLRQAK) is disordered. Positions 3–53 (SQSQGIQQLLQAEKRAKDKLEEAKKRKNKRLRQAKEEATADIDQYRLKREG) form a coiled coil. Over residues 14 to 26 (AEKRAKDKLEEAK) the composition is skewed to basic and acidic residues.

Belongs to the V-ATPase G subunit family. V-ATPase is a heteromultimeric enzyme made up of two complexes: the ATP-hydrolytic V1 complex and the proton translocation V0 complex. The V1 complex consists of three catalytic AB heterodimers that form a heterohexamer, three peripheral stalks each consisting of EG heterodimers, one central rotor including subunits D and F, and the regulatory subunits C and H. The proton translocation complex V0 consists of the proton transport subunit a, a ring of proteolipid subunits c9c'', rotary subunit d, subunits e and f, and two accessory subunits.

In terms of biological role, subunit of the V1 complex of vacuolar(H+)-ATPase (V-ATPase), a multisubunit enzyme composed of a peripheral complex (V1) that hydrolyzes ATP and a membrane integral complex (V0) that translocates protons. V-ATPase is responsible for acidifying and maintaining the pH of intracellular compartments and in some cell types, is targeted to the plasma membrane, where it is responsible for acidifying the extracellular environment. The protein is V-type proton ATPase subunit G 3 (atp6v1g3) of Xenopus tropicalis (Western clawed frog).